An 837-amino-acid polypeptide reads, in one-letter code: Ubiquitin carboxyl-terminal hydrolase A (837 aa).

The UBP-type; degenerate zinc-finger motif lies at 166–277 (PSAFAESIIQ…QHLTHWGLNP (112 aa)). Residues 319–835 (TGIENLGNSC…LGYIYFYKRQ (517 aa)) enclose the USP domain. The active-site Nucleophile is C328. The 42-residue stretch at 628–669 (SFNQEVLDTLLSMDFPLVRCKKALLATGGKDAELAMNWIFEH) folds into the UBA 1 domain. Residues 676 to 695 (DIEQTPVNNNNNNNNSSNSN) are disordered. Over residues 683 to 695 (NNNNNNNNSSNSN) the composition is skewed to low complexity. The UBA 2 domain maps to 700-740 (VFNSQDVDNIIGMGFTDSQAKLALKNTKGNLERAADWLFSH). H797 acts as the Proton acceptor in catalysis.

This sequence belongs to the peptidase C19 family.

The enzyme catalyses Thiol-dependent hydrolysis of ester, thioester, amide, peptide and isopeptide bonds formed by the C-terminal Gly of ubiquitin (a 76-residue protein attached to proteins as an intracellular targeting signal).. In terms of biological role, required for development but not growth. The sequence is that of Ubiquitin carboxyl-terminal hydrolase A (ubpA) from Dictyostelium discoideum (Social amoeba).